A 161-amino-acid chain; its full sequence is Aklanonic acid methyl ester cyclase DauD (161 aa).

Glutamine 106 lines the substrate pocket. The disordered stretch occupies residues 137–161; it reads WPTPEGWRPCPPPPRRRHDRSTDTP.

Belongs to the polyketide cyclase DnrD family. As to quaternary structure, homotetramer.

It carries out the reaction methyl aklanonate = aklaviketone. Its pathway is antibiotic biosynthesis; daunorubicin biosynthesis. It functions in the pathway antibiotic biosynthesis; carminomycin biosynthesis. It participates in antibiotic biosynthesis; rhodomycin biosynthesis. The protein operates within antibiotic biosynthesis; aclacinomycin biosynthesis. In terms of biological role, involved in the biosynthesis of aklavinone which is an important precursor common to the formation of the clinically significant anthracyclines such as carminomycin, daunorubicin (daunomycin), rhodomycin, aclacinomycin T (aklavin) and aclacinomycin A (aclarubicin). These compounds are aromatic polyketide antibiotics that exhibit high cytotoxicity and are widely applied in the chemotherapy of a variety of cancers. Catalyzes the cyclization of aklanonic acid methyl ester to yield aklaviketone. This is Aklanonic acid methyl ester cyclase DauD (dauD) from Streptomyces sp. (strain C5).